A 396-amino-acid polypeptide reads, in one-letter code: Elongation factor Tu (396 aa).

In terms of domain architecture, tr-type G spans lysine 10–glutamate 205. Residues glycine 19–threonine 26 are G1. Glycine 19–threonine 26 is a GTP binding site. Threonine 26 is a binding site for Mg(2+). A G2 region spans residues glycine 62 to asparagine 66. Residues aspartate 83–glycine 86 form a G3 region. GTP is bound by residues aspartate 83–histidine 87 and asparagine 138–aspartate 141. Positions asparagine 138 to aspartate 141 are G4. The tract at residues serine 175–leucine 177 is G5.

It belongs to the TRAFAC class translation factor GTPase superfamily. Classic translation factor GTPase family. EF-Tu/EF-1A subfamily. Monomer.

The protein resides in the cytoplasm. The catalysed reaction is GTP + H2O = GDP + phosphate + H(+). Its function is as follows. GTP hydrolase that promotes the GTP-dependent binding of aminoacyl-tRNA to the A-site of ribosomes during protein biosynthesis. This chain is Elongation factor Tu, found in Corynebacterium jeikeium (strain K411).